The primary structure comprises 1141 residues: Serine-aspartate repeat-containing protein E (1141 aa).

The first 52 residues, 1-52 (MINRDNKKAITKKGMISNRLNKFSIRKYTVGTASILVGTTLIFGLGNQEAKA), serve as a signal peptide directing secretion. Residues 23-34 (FSIRKYTVGTAS) carry the YSIRK-G/S signaling motif motif. Residues 53-601 (AENTSTENAK…GDGTVKPEEK (549 aa)) form a ligand binding A region region. Residues 54-248 (ENTSTENAKQ…RSTKPVATAP (195 aa)) form a disordered region. The segment covering 61–75 (AKQDDATTSDNKEVV) has biased composition (basic and acidic residues). Over residues 77-90 (ETENNSTTENDSTN) the composition is skewed to low complexity. Residues 92 to 108 (IKKETNTDSQPEAKEES) are compositionally biased toward basic and acidic residues. Low complexity predominate over residues 109–126 (TTSSTQQQQNNVTATTET). Residues 130-145 (NIEKENVKPSTDKTAT) are compositionally biased toward basic and acidic residues. Residues 159-207 (NYTNNDVTTKPSTSEIQTKPTTPQESTNIENSQPQPTPSKVDNQVTDAT) are compositionally biased toward polar residues. The segment covering 216-241 (SKEELKNNPEKLKELVRNDNNTDRST) has biased composition (basic and acidic residues). 3 consecutive CNA-B domains span residues 602–714 (LYKI…YKEP), 715–824 (KYNL…YKTP), and 825–935 (KYSL…EEDT). The interval 929 to 1117 (GYFEEDTSDS…GSENNGSNNA (189 aa)) is disordered. A compositionally biased stretch (acidic residues) spans 930–1080 (YFEEDTSDSD…DSDSDSDSDS (151 aa)). Residues 1104–1108 (LPETG) carry the LPXTG sorting signal motif. A Pentaglycyl murein peptidoglycan amidated threonine modification is found at Thr1107. A propeptide spans 1108–1141 (GSENNGSNNATLFGGLFAALGSLLLFGRRKKQNK) (removed by sortase).

This sequence belongs to the serine-aspartate repeat-containing protein (SDr) family. Interacts with host complement factor H/CFAH (via C-terminus). Interacts with host complement regulator C4BPA.

The protein resides in the secreted. It localises to the cell wall. In terms of biological role, cell surface-associated calcium-binding protein which plays an important role in adhesion and pathogenesis. Contributes to the resistance to killing by innate immune components in blood and thus attenuates bacterial clearance by interacting with host complement factor H/CFAH and modulating its activity. Inhibits also bacterial opsonization and killing by interacting with host complement regulator C4BPA and thus inhibiting classical complement pathway activation. The protein is Serine-aspartate repeat-containing protein E (sdrE) of Staphylococcus aureus (strain Mu50 / ATCC 700699).